A 718-amino-acid chain; its full sequence is Coiled-coil domain-containing protein 157 (718 aa).

The stretch at 300-603 (LRAQLEDAEG…LTKIREVAQQ (304 aa)) forms a coiled coil. Residues 469 to 482 (RGSLDEAEAQRSEL) show a composition bias toward basic and acidic residues. 2 disordered regions span residues 469–490 (RGSL…QSLQ) and 617–690 (PPYK…TQNP). Positions 639–659 (TGRRQSPGSRTSSTGRTHPGG) are enriched in low complexity.

This Mus musculus (Mouse) protein is Coiled-coil domain-containing protein 157 (Ccdc157).